The primary structure comprises 296 residues: UDP-N-acetylenolpyruvoylglucosamine reductase (296 aa).

Residues 26-191 (RIGGPANYFK…LSATFRLSRN (166 aa)) form the FAD-binding PCMH-type domain. Arg170 is an active-site residue. The active-site Proton donor is Cys218. Residue Glu287 is part of the active site.

Belongs to the MurB family. It depends on FAD as a cofactor.

The protein localises to the cytoplasm. The catalysed reaction is UDP-N-acetyl-alpha-D-muramate + NADP(+) = UDP-N-acetyl-3-O-(1-carboxyvinyl)-alpha-D-glucosamine + NADPH + H(+). It participates in cell wall biogenesis; peptidoglycan biosynthesis. Functionally, cell wall formation. This Chlamydia abortus (strain DSM 27085 / S26/3) (Chlamydophila abortus) protein is UDP-N-acetylenolpyruvoylglucosamine reductase.